The following is a 727-amino-acid chain: MATNTKMETFVITGMTCANCSARIEKELNEQPGVMSATVNLATEKASVKYTDTTTERLIKSVENIGYGAILYDEAHKQKIAEEKQTYLRKMKFDLIFSAILTLPLMLAMIAMMLGSHGPIVSFFHLSLVQLLFALPVQFYVGWRFYKGAYHALKTKAPNMDVLVAIGTSAAFALSIYNGFFPSHSHDLYFESSSMIITLILLGKYLEHTAKSKTGDAIKQMMSLQTKTAQVLRDGKEETIAIDEVMIDDILVIRPGEQVPTDGRIIAGTSALDESMLTGESVPVEKKEKDMVFGGTINTNGLIQIQVSQIGKDTVLAQIIQMVEDAQGSKAPIQQIADKISGIFVPIVLFLALVTLLVTGWLTKDWQLALLHSVSVLVIACPCALGLATPTAIMVGTGVGAHNGILIKGGEALEGAAHLNSIILDKTGTITQGRPEVTDVIGPKEIISLFYSLEHASEHPLGKAIVAYGAKVGAKTQPITDFVAHPGAGISGTINGVHYFAGTRKRLAEMNLSFDEFQEQALELEQAGKTVMFLANEEQVLGMIAVADQIKEDAKQAIEQLQQKGVDVFMVTGDNQRAAQAIGKQVGIDSDHIFAEVLPEEKANYVEKLQKAGKKVGMVGDGINDAPALALADVGIAMGSGTDIAMETADVTLMNSHLTSINQMISLSAATLKKIKQNLFWAFIYNTIGIPFAAFGFLNPIIAGGAMAFSSISVLLNSLSLNRKTIK.

At 1–94 the chain is on the cytoplasmic side; that stretch reads MATNTKMETF…QTYLRKMKFD (94 aa). The HMA domain occupies 6 to 70; the sequence is KMETFVITGM…SVENIGYGAI (65 aa). Cu(+)-binding residues include C17 and C20. The helical transmembrane segment at 95–115 threads the bilayer; the sequence is LIFSAILTLPLMLAMIAMMLG. The Extracellular portion of the chain corresponds to 116–119; it reads SHGP. The chain crosses the membrane as a helical span at residues 120 to 137; the sequence is IVSFFHLSLVQLLFALPV. Residues 138-161 are Cytoplasmic-facing; it reads QFYVGWRFYKGAYHALKTKAPNMD. The chain crosses the membrane as a helical span at residues 162-181; it reads VLVAIGTSAAFALSIYNGFF. Topologically, residues 182–187 are extracellular; sequence PSHSHD. Residues 188 to 203 traverse the membrane as a helical segment; it reads LYFESSSMIITLILLG. At 204 to 341 the chain is on the cytoplasmic side; that stretch reads KYLEHTAKSK…PIQQIADKIS (138 aa). The chain crosses the membrane as a helical span at residues 342-362; that stretch reads GIFVPIVLFLALVTLLVTGWL. Residues 363-375 are Extracellular-facing; it reads TKDWQLALLHSVS. A helical membrane pass occupies residues 376–396; sequence VLVIACPCALGLATPTAIMVG. The Cytoplasmic portion of the chain corresponds to 397–678; that stretch reads TGVGAHNGIL…AATLKKIKQN (282 aa). D425 (4-aspartylphosphate intermediate) is an active-site residue. D621 and D625 together coordinate Mg(2+). The chain crosses the membrane as a helical span at residues 679–698; that stretch reads LFWAFIYNTIGIPFAAFGFL. The Extracellular segment spans residues 699–700; the sequence is NP. Residues 701 to 721 form a helical membrane-spanning segment; that stretch reads IIAGGAMAFSSISVLLNSLSL. Residues 722–727 are Cytoplasmic-facing; the sequence is NRKTIK.

Belongs to the cation transport ATPase (P-type) (TC 3.A.3) family. Type IB subfamily. As to quaternary structure, monomer. Interacts with the copper chaperone CopZ.

It is found in the cell membrane. It carries out the reaction Cu(+)(in) + ATP + H2O = Cu(+)(out) + ADP + phosphate + H(+). Its activity is regulated as follows. Inhibited by vanadate. Its function is as follows. Probably involved in copper import under copper limiting conditions. This chain is Probable copper-importing P-type ATPase A (copA), found in Enterococcus hirae (strain ATCC 9790 / DSM 20160 / JCM 8729 / LMG 6399 / NBRC 3181 / NCIMB 6459 / NCDO 1258 / NCTC 12367 / WDCM 00089 / R).